Reading from the N-terminus, the 147-residue chain is Hemoglobin subunit epsilon-M (147 aa).

The Globin domain maps to 3 to 147 (HFTPEDKTNI…VSSALGHKYH (145 aa)). A phosphoserine mark is found at serine 14 and serine 51. Heme b-binding residues include histidine 64 and histidine 93.

The protein belongs to the globin family. As to expression, red blood cells.

In terms of biological role, hemoglobin epsilon chain is a beta-type chain found in early embryos. The sequence is that of Hemoglobin subunit epsilon-M (HBE1) from Didelphis virginiana (North American opossum).